Here is a 467-residue protein sequence, read N- to C-terminus: Uronate isomerase (467 aa).

This sequence belongs to the metallo-dependent hydrolases superfamily. Uronate isomerase family.

The catalysed reaction is D-glucuronate = D-fructuronate. It catalyses the reaction aldehydo-D-galacturonate = keto-D-tagaturonate. It functions in the pathway carbohydrate metabolism; pentose and glucuronate interconversion. The sequence is that of Uronate isomerase from Solibacter usitatus (strain Ellin6076).